A 454-amino-acid polypeptide reads, in one-letter code: Cell division cycle-associated 7-like protein (454 aa).

The Integrase domain-binding motif 1 (IBM1) motif lies at Ile-9–Val-33. Ser-21 carries the post-translational modification Phosphoserine. The Integrase domain-binding motif 2 (IBM2) motif lies at Phe-65–Asp-91. A Phosphothreonine modification is found at Thr-77. A Phosphoserine modification is found at Ser-79. 2 positions are modified to phosphothreonine: Thr-81 and Thr-88. Disordered regions lie at residues Val-103–Ser-169 and Gln-188–Ala-213. Ser-105, Ser-108, Ser-117, Ser-138, Ser-139, Ser-162, Ser-195, and Ser-197 each carry phosphoserine. Acidic residues predominate over residues Ser-117–Asp-126. The segment at Ala-213 to Leu-235 is MYC-binding. Glycyl lysine isopeptide (Lys-Gly) (interchain with G-Cter in SUMO2) cross-links involve residues Lys-222 and Lys-225. Ser-261 is modified (phosphoserine).

As to quaternary structure, interacts with MYC. Interacts (via IBM motifs) with PSIP1 (via IBD domain); phosphorylation increases its affinity for PSIP1. In terms of processing, phosphorylation increases its interaction with PSIP1. As to expression, ubiquitous. Overexpressed in medulloblastoma.

It is found in the cytoplasm. Its subcellular location is the nucleus. Its function is as follows. Plays a role in transcriptional regulation as a repressor that inhibits monoamine oxidase A (MAOA) activity and gene expression by binding to the promoter. Plays an important oncogenic role in mediating the full transforming effect of MYC in medulloblastoma cells. Involved in apoptotic signaling pathways; May act downstream of P38-kinase and BCL-2, but upstream of CASP3/caspase-3 as well as CCND1/cyclin D1 and E2F1. This Homo sapiens (Human) protein is Cell division cycle-associated 7-like protein (CDCA7L).